A 485-amino-acid polypeptide reads, in one-letter code: E3 ubiquitin-protein ligase TRIM58 (485 aa).

The segment at 15–59 adopts an RING-type zinc-finger fold; the sequence is CSVCLDFLQEPISVDCGHSFCLRCISEFCEKSDSAQGVYACPQCR. The B box-type zinc-finger motif lies at 90–131; it reads AGSRQCARHGEDLSHFCEEDQTMLCWVCDTSPEHRSHRTETL. 4 residues coordinate Zn(2+): C95, H98, C117, and H123. The stretch at 192–241 forms a coiled coil; it reads LAQEEQLQLRRLEEEERATLQRLRDSRNRLAQQNKALKELAEELEERSQR. The B30.2/SPRY domain maps to 271–466; the sequence is DLKTVCRIPG…LPPMTEAAPG (196 aa).

Belongs to the TRIM/RBCC family. As to expression, expressed in erythroblasts.

It catalyses the reaction S-ubiquitinyl-[E2 ubiquitin-conjugating enzyme]-L-cysteine + [acceptor protein]-L-lysine = [E2 ubiquitin-conjugating enzyme]-L-cysteine + N(6)-ubiquitinyl-[acceptor protein]-L-lysine.. The protein operates within protein modification; protein ubiquitination. Its function is as follows. E3 ubiquitin ligase induced during late erythropoiesis. Directly binds and ubiquitinates the intermediate chain of the microtubule motor dynein (DYNC1LI1/DYNC1LI2), stimulating the degradation of the dynein holoprotein complex. May participate in the erythroblast enucleation process through regulation of nuclear polarization. This chain is E3 ubiquitin-protein ligase TRIM58 (Trim58), found in Mus musculus (Mouse).